Consider the following 386-residue polypeptide: Probable copper-dependent oxygenase M1 (386 aa).

An N-terminal signal peptide occupies residues 1–22 (MLRMKKICTAFLTIALCTHVLA). Asn86 carries an N-linked (GlcNAc...) asparagine glycan. A helical transmembrane segment spans residues 334–354 (FVVPIAAIAFIALTIGAGYVF).

The protein belongs to the clz3 oxygenase family.

Its subcellular location is the membrane. The protein operates within secondary metabolite biosynthesis. Probable copper-dependent oxygenase; part of the gene cluster that mediates the biosynthesis of squalestatin S1 (SQS1, also known as zaragozic acid A), a heavily oxidized fungal polyketide that offers potent cholesterol lowering activity by targeting squalene synthase (SS). SQS1 is composed of a 2,8-dioxobicyclic[3.2.1]octane-3,4,5-tricarboxyclic acid core that is connected to two lipophilic polyketide arms. These initial steps feature the priming of an unusual benzoic acid starter unit onto the highly reducing polyketide synthase pks2, followed by oxaloacetate extension and product release to generate a tricarboxylic acid containing product. The phenylalanine ammonia lyase (PAL) M7 and the acyl-CoA ligase M9 are involved in transforming phenylalanine into benzoyl-CoA. The citrate synthase-like protein R3 is involved in connecting the C-alpha-carbons of the hexaketide chain and oxaloacetate to afford the tricarboxylic acid unit. The potential hydrolytic enzymes, M8 and M10, are in close proximity to pks2 and may participate in product release. On the other side, the tetraketide arm is synthesized by a the squalestatin tetraketide synthase pks1 and enzymatically esterified to the core in the last biosynthetic step, by the acetyltransferase M4. The biosynthesis of the tetraketide must involve 3 rounds of chain extension. After the first and second rounds methyl-transfer occurs, and in all rounds of extension the ketoreductase and dehydratase are active. The enoyl reductase and C-MeT of pks1 are not active in the final round of extension. The acetyltransferase M4 appears to have a broad substrate selectivity for its acyl CoA substrate, allowing the in vitro synthesis of novel squalestatins. The biosynthesis of SQS1 requires several oxidative steps likely performed by oxidoreductases M1, R1 and R2. Finally, in support of the identification of the cluster as being responsible for SQS1 production, the cluster contains a gene encoding a putative squalene synthase (SS) R6, suggesting a likely mechanism for self-resistance. This chain is Probable copper-dependent oxygenase M1, found in Phoma sp. (strain ATCC 20986 / MF5453).